A 212-amino-acid chain; its full sequence is Probable U3 small nucleolar RNA-associated protein 11 (212 aa).

The protein belongs to the UTP11 family. Component of the ribosomal small subunit (SSU) processome.

The protein resides in the nucleus. The protein localises to the nucleolus. Functionally, involved in nucleolar processing of pre-18S ribosomal RNA. This is Probable U3 small nucleolar RNA-associated protein 11 from Plasmodium falciparum (isolate 3D7).